Here is a 154-residue protein sequence, read N- to C-terminus: Protein X (154 aa).

The interval 26–45 (RGRPVSGPLGSLSSSSPSAV) is disordered. Over residues 31–43 (SGPLGSLSSSSPS) the composition is skewed to low complexity. The mitochondrial targeting sequence stretch occupies residues 68 to 117 (PCALRFTSARRMETTVNAHQILPKILHKRTLGLSTMSTTDLEAYFKDCLF).

It belongs to the orthohepadnavirus protein X family. May form homodimer. May interact with host CEBPA, CFLAR, CREB1, DDB1, E4F1, HBXIP, HSPD1/HSP60, NFKBIA, POLR2E and SMAD4. Interacts with host SMC5-SMC6 complex and induces its degradation. Interacts with host TRPC4AP; leading to prevent ubiquitination of TRPC4AP. Interacts with host PLSCR1; this interaction promotes ubiquitination and degradation of HBx and impairs HBx-mediated cell proliferation. Post-translationally, a fraction may be phosphorylated in insect cells and HepG2 cells, a human hepatoblastoma cell line. Phosphorylated in vitro by host protein kinase C or mitogen-activated protein kinase. N-acetylated in insect cells.

The protein localises to the host cytoplasm. The protein resides in the host nucleus. Its subcellular location is the host mitochondrion. Its function is as follows. Multifunctional protein that plays a role in silencing host antiviral defenses and promoting viral transcription. Does not seem to be essential for HBV infection. May be directly involved in development of cirrhosis and liver cancer (hepatocellular carcinoma). Most of cytosolic activities involve modulation of cytosolic calcium. The effect on apoptosis is controversial depending on the cell types in which the studies have been conducted. May induce apoptosis by localizing in mitochondria and causing loss of mitochondrial membrane potential. May also modulate apoptosis by binding host CFLAR, a key regulator of the death-inducing signaling complex (DISC). Promotes viral transcription by using the host E3 ubiquitin ligase DDB1 to target the SMC5-SMC6 complex to proteasomal degradation. This host complex would otherwise bind to viral episomal DNA, and prevents its transcription. Moderately stimulates transcription of many different viral and cellular transcription elements. Promoters and enhancers stimulated by HBx contain DNA binding sites for NF-kappa-B, AP-1, AP-2, c-EBP, ATF/CREB, or the calcium-activated factor NF-AT. In Hepatitis B virus genotype D subtype ayw (isolate Japan/JYW796/1988) (HBV-D), this protein is Protein X.